We begin with the raw amino-acid sequence, 122 residues long: Large ribosomal subunit protein uL18 (122 aa).

The protein belongs to the universal ribosomal protein uL18 family. In terms of assembly, part of the 50S ribosomal subunit; part of the 5S rRNA/L5/L18/L25 subcomplex. Contacts the 5S and 23S rRNAs.

Functionally, this is one of the proteins that bind and probably mediate the attachment of the 5S RNA into the large ribosomal subunit, where it forms part of the central protuberance. This is Large ribosomal subunit protein uL18 from Lachnospira eligens (strain ATCC 27750 / DSM 3376 / VPI C15-48 / C15-B4) (Eubacterium eligens).